The chain runs to 261 residues: Hemin import ATP-binding protein HmuV (261 aa).

The 237-residue stretch at 7-243 (LRGQNLSLQF…EIIDAVYGYK (237 aa)) folds into the ABC transporter domain. ATP is bound at residue 39 to 46 (GPNGAGKS).

The protein belongs to the ABC transporter superfamily. Heme (hemin) importer (TC 3.A.1.14.5) family. As to quaternary structure, the complex is composed of two ATP-binding proteins (HmuV), two transmembrane proteins (HmuU) and a solute-binding protein (HmuT).

The protein localises to the cell inner membrane. Part of the ABC transporter complex HmuTUV involved in hemin import. Responsible for energy coupling to the transport system. This chain is Hemin import ATP-binding protein HmuV, found in Vibrio vulnificus (strain YJ016).